The sequence spans 545 residues: Luciferin 4-monooxygenase (545 aa).

A Microbody targeting signal motif is present at residues 543 to 545 (SKL).

Belongs to the ATP-dependent AMP-binding enzyme family. Requires Mg(2+) as cofactor.

It is found in the peroxisome. The catalysed reaction is firefly D-luciferin + ATP + O2 = firefly oxyluciferin + hnu + AMP + CO2 + diphosphate. Functionally, produces green light with a wavelength of 562 nm. This chain is Luciferin 4-monooxygenase, found in Photuris pensylvanica (Pennsylania firefly).